A 241-amino-acid chain; its full sequence is MSSSTQPAQTSPSPSKITLSADSQLNGFEWWRRSLQYQTGLGLTPSEKAQYEYDYFHRNLDQKCDTCNDHLKWVLAYSPSVRFMMDHIQKLNKSNEPVPRNKIVCQTCDFTKGGGFDPNHGIVLCSNYIRSKWQLEDILAHELVHVYDYMKFNVNMLDLRQHACTEIRASMLSGECRVWNEMKKTGMGNFGKKFQECIRRRAVLSVEANPVCKSREEAEKAVDVVWKSCFNDTRPFERVYR.

His-141 lines the a divalent metal cation pocket. Glu-142 is a catalytic residue. His-145 contacts a divalent metal cation.

Belongs to the peptidase M76 family.

The protein localises to the mitochondrion inner membrane. Functionally, has a dual role in the assembly of mitochondrial ATPase. Acts as a protease that removes N-terminal residues of mitochondrial ATPase CF(0) subunit 6 at the intermembrane space side. Also involved in the correct assembly of the membrane-embedded ATPase CF(0) particle, probably mediating association of subunit 6 with the subunit 9 ring. This chain is Mitochondrial inner membrane protease ATP23 (ATP23), found in Lodderomyces elongisporus (strain ATCC 11503 / CBS 2605 / JCM 1781 / NBRC 1676 / NRRL YB-4239) (Yeast).